Here is a 172-residue protein sequence, read N- to C-terminus: uncharacterized protein (172 aa).

One can recognise an N-acetyltransferase domain in the interval 12–172 (IRLRCMEDRD…IAVYERKSYN (161 aa)).

This is an uncharacterized protein from Bacillus subtilis (strain 168).